The primary structure comprises 445 residues: Proline--tRNA ligase (445 aa).

This sequence belongs to the class-II aminoacyl-tRNA synthetase family. ProS type 2 subfamily. In terms of assembly, homodimer.

The protein resides in the cytoplasm. It carries out the reaction tRNA(Pro) + L-proline + ATP = L-prolyl-tRNA(Pro) + AMP + diphosphate. Functionally, catalyzes the attachment of proline to tRNA(Pro) in a two-step reaction: proline is first activated by ATP to form Pro-AMP and then transferred to the acceptor end of tRNA(Pro). This Dinoroseobacter shibae (strain DSM 16493 / NCIMB 14021 / DFL 12) protein is Proline--tRNA ligase.